The primary structure comprises 556 residues: MYRVFASRALRAKSLCDKSSTSLASLTLSRLNHSIPFATVDAEELSGAHPAEVQSFVQGKWIGSSNHNTLLDPLNGEPFIKVAEVDESGTQPFVDSLSQCPKHGLHNPFKSPERYLLYGDISTKAAHMLALPKVADFFARLIQRVAPKSYQQAAGEVFVTRKFLENFCGDQVRFLARSFAIPGNHLGQQSHGYRWPYGPVTIVTPFNFPLEIPLLQLMGALYMGNKPLLKVDSKVSIVMEQMMRLLHYCGLPAEDVDFINSDGKTMNKILLEANPRMTLFTGSSRVAEKLALDLKGRIRLEDAGFDWKVLGPDVQEVDYVAWQCDQDAYACSGQKCSAQSMLFVHENWSKTPLVSKLKELAERRKLEDLTIGPVLTFTTEAMLEHMENLLQIPGSKLLFGGKELKNHSIPSIYGALEPTAVYVPIEEILKDNKTYELVTKEIFGPFQIVTEYKKDQLPLVLEALERMHAHLTAAVVSNDPIFLQEVIGNSVNGTTYAGLRGRTTGAPQNHWFGPAGDPRGAGIGTPEAIKLVWSCHREVIYDYGPVPQGWELPPST.

Position 282–287 (282–287 (GSSRVA)) interacts with NAD(+). The active-site Proton acceptor is Glu-301. The active-site Nucleophile is Cys-336.

The protein belongs to the aldehyde dehydrogenase family. As to expression, highly expressed in flowers. Constitutively expressed at low levels in the other tissues. Highly expressed in pollen grains and tissues undergoing cell death. Expressed in old leaves, mature siliques and developing embryos.

The protein localises to the mitochondrion matrix. The catalysed reaction is (S)-1-pyrroline-5-carboxylate + NAD(+) + 2 H2O = L-glutamate + NADH + H(+). It functions in the pathway amino-acid degradation; L-proline degradation into L-glutamate; L-glutamate from L-proline: step 2/2. Functionally, plays a role in the inhibition of programmed cell death by converting the toxic proline catabolism intermediate (s)-1-pyrroline-5-carboxylate (P5C) to glutamate. The protein is Delta-1-pyrroline-5-carboxylate dehydrogenase 12A1, mitochondrial of Arabidopsis thaliana (Mouse-ear cress).